Consider the following 1057-residue polypeptide: Probable E3 ubiquitin-protein ligase HERC4 (1057 aa).

7 RCC1 repeats span residues 1 to 51, 52 to 101, 102 to 154, 156 to 207, 208 to 259, 261 to 311, and 313 to 368; these read MLCW…FVLD, DGTV…ALND, KGQV…ALSK, SEVF…VLTL, SGAI…ALTK, GGVF…AFVP, and SGRI…KRIF. The HECT domain maps to 730–1057; the sequence is KNIDYKKPLK…IDHNEGFSLI (328 aa). Residue Cys1025 is the Glycyl thioester intermediate of the active site.

Expressed in brain and testis and detected in heart and placenta.

It is found in the cytoplasm. The protein resides in the cytosol. It carries out the reaction S-ubiquitinyl-[E2 ubiquitin-conjugating enzyme]-L-cysteine + [acceptor protein]-L-lysine = [E2 ubiquitin-conjugating enzyme]-L-cysteine + N(6)-ubiquitinyl-[acceptor protein]-L-lysine.. The protein operates within protein modification; protein ubiquitination. Its function is as follows. Probable E3 ubiquitin-protein ligase involved in either protein trafficking or in the distribution of cellular structures. Required for spermatozoon maturation and fertility, and for the removal of the cytoplasmic droplet of the spermatozoon. E3 ubiquitin-protein ligases accept ubiquitin from an E2 ubiquitin-conjugating enzyme in the form of a thioester and then directly transfer it to targeted substrates. The polypeptide is Probable E3 ubiquitin-protein ligase HERC4 (HERC4) (Homo sapiens (Human)).